The chain runs to 161 residues: MASKNSASLALFFALNILFFTLTVATNCNCKPSPKPKPVPSPKPKPVQCPPPPRPSVPSPNPRPVTPPRTPGSSGNSCPIDALKLGVCANVLSSLLNIQLGQPSSQQCCSLIQGLVDVDAAICLCTALRANVLGINLNVPISLSVLLNVCNRKLPSGFQCA.

Positions 1–25 are cleaved as a signal peptide; that stretch reads MASKNSASLALFFALNILFFTLTVA. The A-1 repeat unit spans residues 32-39; that stretch reads PSPKPKPV. Positions 32 to 76 are disordered; it reads PSPKPKPVPSPKPKPVQCPPPPRPSVPSPNPRPVTPPRTPGSSGN. Positions 33–70 are enriched in pro residues; that stretch reads SPKPKPVPSPKPKPVQCPPPPRPSVPSPNPRPVTPPRT. Positions 34 to 49 are 2 X 8 AA tandem repeats A of P-S-P-K-P-K-P-V; it reads PKPKPVPSPKPKPVQC. The A-2 repeat unit spans residues 40–47; sequence PSPKPKPV.

Belongs to the plant LTP family. PEARLI1 subfamily. In terms of assembly, self-interacts and binds to DIR1. Interacts with PDLP1.

It is found in the secreted. The protein resides in the cell wall. Its subcellular location is the endoplasmic reticulum. The protein localises to the cell junction. It localises to the plasmodesma. It is found in the plastid. The protein resides in the chloroplast. Functionally, probable lipid transfer protein (LTP). Seems to control the flowering process and lignin synthesis. Together with DIR1, required for glycerol-3-phosphate- (G3P) and azelaic acid- (AA) induced systemic acquired resistance (SAR). Component of plant systemic immunity involved in priming defenses in a AA-dependent manner, by modulating production and/or translocation of a mobile signal(s) during SAR. Confers resistance to Botrytis cinerea and Pseudomonas syringae pv. tomato DC3000 and PmaDG3. May be involved in induced systemic resistance (ISR) mediated by non-pathogenic bacteria (e.g. P. fluorescens GM30). Prevents electrolyte leakage during freezing damage. In Arabidopsis thaliana (Mouse-ear cress), this protein is pEARLI1-like lipid transfer protein 1 (AZI1).